The sequence spans 95 residues: Sec-independent protein translocase protein TatA (95 aa).

The helical transmembrane segment at methionine 1–glycine 21 threads the bilayer. The disordered stretch occupies residues glycine 42–valine 95.

Belongs to the TatA/E family. As to quaternary structure, the Tat system comprises two distinct complexes: a TatABC complex, containing multiple copies of TatA, TatB and TatC subunits, and a separate TatA complex, containing only TatA subunits. Substrates initially bind to the TatABC complex, which probably triggers association of the separate TatA complex to form the active translocon.

The protein localises to the cell inner membrane. Part of the twin-arginine translocation (Tat) system that transports large folded proteins containing a characteristic twin-arginine motif in their signal peptide across membranes. TatA could form the protein-conducting channel of the Tat system. This Methylorubrum extorquens (strain PA1) (Methylobacterium extorquens) protein is Sec-independent protein translocase protein TatA.